The primary structure comprises 344 residues: S-adenosylmethionine:tRNA ribosyltransferase-isomerase (344 aa).

Belongs to the QueA family. Monomer.

It is found in the cytoplasm. The catalysed reaction is 7-aminomethyl-7-carbaguanosine(34) in tRNA + S-adenosyl-L-methionine = epoxyqueuosine(34) in tRNA + adenine + L-methionine + 2 H(+). Its pathway is tRNA modification; tRNA-queuosine biosynthesis. Its function is as follows. Transfers and isomerizes the ribose moiety from AdoMet to the 7-aminomethyl group of 7-deazaguanine (preQ1-tRNA) to give epoxyqueuosine (oQ-tRNA). This Acinetobacter baylyi (strain ATCC 33305 / BD413 / ADP1) protein is S-adenosylmethionine:tRNA ribosyltransferase-isomerase.